Here is a 264-residue protein sequence, read N- to C-terminus: Aminoglycoside 3'-phosphotransferase (264 aa).

Asp190 (proton acceptor) is an active-site residue.

This sequence belongs to the aminoglycoside phosphotransferase family.

It catalyses the reaction kanamycin A + ATP = kanamycin 3'-phosphate + ADP + H(+). Resistance to kanamycin and structurally-related aminoglycosides, including amikacin. The polypeptide is Aminoglycoside 3'-phosphotransferase (aphA) (Enterococcus faecalis (Streptococcus faecalis)).